A 74-amino-acid polypeptide reads, in one-letter code: Translation initiation factor IF-1 (74 aa).

Residues 1-73 (MSNKEDIIKM…TKGRIVYRKK (73 aa)) enclose the S1-like domain.

Belongs to the IF-1 family. In terms of assembly, component of the 30S ribosomal translation pre-initiation complex which assembles on the 30S ribosome in the order IF-2 and IF-3, IF-1 and N-formylmethionyl-tRNA(fMet); mRNA recruitment can occur at any time during PIC assembly.

It is found in the cytoplasm. In terms of biological role, one of the essential components for the initiation of protein synthesis. Stabilizes the binding of IF-2 and IF-3 on the 30S subunit to which N-formylmethionyl-tRNA(fMet) subsequently binds. Helps modulate mRNA selection, yielding the 30S pre-initiation complex (PIC). Upon addition of the 50S ribosomal subunit IF-1, IF-2 and IF-3 are released leaving the mature 70S translation initiation complex. The protein is Translation initiation factor IF-1 of Thermosipho melanesiensis (strain DSM 12029 / CIP 104789 / BI429).